We begin with the raw amino-acid sequence, 164 residues long: MKILQYALLACLLVSILGDDDDEENEGAAGSDDAGATPTALSKPAATSAEGNTAAKNSGGDIKQPKQELPEPSSKGQKKPRLPKRCLFKPEQGNCAGSRFLPRWWYNPETESCEPFTYPVCNKKNEAFVSCTLCMNMCMRNKRGREKAKWIRKVCRKSPKVKSG.

Positions 1-18 (MKILQYALLACLLVSILG) are cleaved as a signal peptide. The disordered stretch occupies residues 20 to 84 (DDDEENEGAA…KGQKKPRLPK (65 aa)). The segment covering 27 to 36 (GAAGSDDAGA) has biased composition (low complexity). In terms of domain architecture, BPTI/Kunitz inhibitor spans 86–138 (CLFKPEQGNCAGSRFLPRWWYNPETESCEPFTYPVCNKKNEAFVSCTLCMNMC). 4 disulfide bridges follow: cysteine 86–cysteine 138, cysteine 95–cysteine 121, cysteine 113–cysteine 134, and cysteine 131–cysteine 155.

As to expression, expressed in salivary glands.

The protein resides in the secreted. Its function is as follows. Anticoagulant protein that may inhibit serine proteases. The anticoagulant effect of this recombinant protein on blood clotting is found both in the recalcification time (RT) and the activated partial thromboplastin time (APTT) tests, indicating it acts in the common pathway of blood coagulation. The sequence is that of Anticoagulant protein rhipilin-1 from Rhipicephalus haemaphysaloides (Tick).